An 875-amino-acid polypeptide reads, in one-letter code: uncharacterized protein (875 aa).

The tract at residues 83-149 is disordered; the sequence is PFQPPPPQPF…QPPQPPPQQL (67 aa). Residues 101–147 are compositionally biased toward pro residues; that stretch reads QQPPQPPPDQPQQPQPPQQPPQQPPQQQPQPPQPPQQPPQPPQPPPQ.

This is an uncharacterized protein from Orgyia pseudotsugata multicapsid polyhedrosis virus (OpMNPV).